The sequence spans 946 residues: Bifunctional glutamine synthetase adenylyltransferase/adenylyl-removing enzyme (946 aa).

The segment at 1–440 (MKPLSSPLQQ…VFNELIGDDE (440 aa)) is adenylyl removase. The adenylyl transferase stretch occupies residues 449–946 (SEHWRELWQD…ASWQKWLVAG (498 aa)).

This sequence belongs to the GlnE family. Mg(2+) serves as cofactor.

The catalysed reaction is [glutamine synthetase]-O(4)-(5'-adenylyl)-L-tyrosine + phosphate = [glutamine synthetase]-L-tyrosine + ADP. The enzyme catalyses [glutamine synthetase]-L-tyrosine + ATP = [glutamine synthetase]-O(4)-(5'-adenylyl)-L-tyrosine + diphosphate. Functionally, involved in the regulation of glutamine synthetase GlnA, a key enzyme in the process to assimilate ammonia. When cellular nitrogen levels are high, the C-terminal adenylyl transferase (AT) inactivates GlnA by covalent transfer of an adenylyl group from ATP to specific tyrosine residue of GlnA, thus reducing its activity. Conversely, when nitrogen levels are low, the N-terminal adenylyl removase (AR) activates GlnA by removing the adenylyl group by phosphorolysis, increasing its activity. The regulatory region of GlnE binds the signal transduction protein PII (GlnB) which indicates the nitrogen status of the cell. The protein is Bifunctional glutamine synthetase adenylyltransferase/adenylyl-removing enzyme of Citrobacter koseri (strain ATCC BAA-895 / CDC 4225-83 / SGSC4696).